The chain runs to 641 residues: Calpain-6 (641 aa).

Residues 26–343 enclose the Calpain catalytic domain; sequence LFCDPTFLPE…FHKLNVCRNV (318 aa). A domain III region spans residues 344-495; the sequence is NNPVFGRKEL…IFSEVPVQLR (152 aa). Residues 498–621 form the C2 domain; it reads TLDMPKMSCW…YLRKKGGPTA (124 aa).

It belongs to the peptidase C2 family. As to quaternary structure, interacts (via domain III) with microtubules. Interacts (via domain II) with ARHGEF2 (via the N-terminal zinc finger).

The protein localises to the cytoplasm. It localises to the perinuclear region. The protein resides in the cytoskeleton. Its subcellular location is the spindle. Functionally, microtubule-stabilizing protein that may be involved in the regulation of microtubule dynamics and cytoskeletal organization. May act as a regulator of RAC1 activity through interaction with ARHGEF2 to control lamellipodial formation and cell mobility. Does not seem to have protease activity as it has lost the active site residues. This chain is Calpain-6 (Capn6), found in Rattus norvegicus (Rat).